A 106-amino-acid chain; its full sequence is Large ribosomal subunit protein eL30 (106 aa).

The protein belongs to the eukaryotic ribosomal protein eL30 family.

This Sulfurisphaera tokodaii (strain DSM 16993 / JCM 10545 / NBRC 100140 / 7) (Sulfolobus tokodaii) protein is Large ribosomal subunit protein eL30 (rpl30e).